A 236-amino-acid chain; its full sequence is Small ribosomal subunit protein uS2c (236 aa).

The protein belongs to the universal ribosomal protein uS2 family.

The protein resides in the plastid. Its subcellular location is the chloroplast. In Vitis vinifera (Grape), this protein is Small ribosomal subunit protein uS2c (rps2).